Here is a 223-residue protein sequence, read N- to C-terminus: Putative 3-methyladenine DNA glycosylase (223 aa).

Belongs to the DNA glycosylase MPG family.

The protein is Putative 3-methyladenine DNA glycosylase of Pseudomonas syringae pv. syringae (strain B728a).